A 428-amino-acid chain; its full sequence is Serine hydroxymethyltransferase (428 aa).

Residues L127 and 131–133 (GHL) each bind (6S)-5,6,7,8-tetrahydrofolate. At K236 the chain carries N6-(pyridoxal phosphate)lysine.

It belongs to the SHMT family. Homodimer. The cofactor is pyridoxal 5'-phosphate.

It localises to the cytoplasm. It carries out the reaction (6R)-5,10-methylene-5,6,7,8-tetrahydrofolate + glycine + H2O = (6S)-5,6,7,8-tetrahydrofolate + L-serine. Its pathway is one-carbon metabolism; tetrahydrofolate interconversion. It functions in the pathway amino-acid biosynthesis; glycine biosynthesis; glycine from L-serine: step 1/1. Its function is as follows. Catalyzes the reversible interconversion of serine and glycine with tetrahydrofolate (THF) serving as the one-carbon carrier. This reaction serves as the major source of one-carbon groups required for the biosynthesis of purines, thymidylate, methionine, and other important biomolecules. Also exhibits THF-independent aldolase activity toward beta-hydroxyamino acids, producing glycine and aldehydes, via a retro-aldol mechanism. The polypeptide is Serine hydroxymethyltransferase (Tropheryma whipplei (strain TW08/27) (Whipple's bacillus)).